A 261-amino-acid polypeptide reads, in one-letter code: Glucosamine-6-phosphate deaminase (261 aa).

The Proton acceptor; for enolization step role is filled by aspartate 67. Aspartate 136 serves as the catalytic For ring-opening step. Histidine 138 (proton acceptor; for ring-opening step) is an active-site residue. Glutamate 143 (for ring-opening step) is an active-site residue.

This sequence belongs to the glucosamine/galactosamine-6-phosphate isomerase family. NagB subfamily.

The enzyme catalyses alpha-D-glucosamine 6-phosphate + H2O = beta-D-fructose 6-phosphate + NH4(+). It functions in the pathway amino-sugar metabolism; N-acetylneuraminate degradation; D-fructose 6-phosphate from N-acetylneuraminate: step 5/5. Catalyzes the reversible isomerization-deamination of glucosamine 6-phosphate (GlcN6P) to form fructose 6-phosphate (Fru6P) and ammonium ion. This chain is Glucosamine-6-phosphate deaminase, found in Streptomyces coelicolor (strain ATCC BAA-471 / A3(2) / M145).